Here is a 492-residue protein sequence, read N- to C-terminus: 1-aminocyclopropane-1-carboxylate synthase 1 (492 aa).

N6-(pyridoxal phosphate)lysine is present on K277.

It belongs to the class-I pyridoxal-phosphate-dependent aminotransferase family. As to quaternary structure, homodimer. Requires pyridoxal 5'-phosphate as cofactor.

The catalysed reaction is S-adenosyl-L-methionine = 1-aminocyclopropane-1-carboxylate + S-methyl-5'-thioadenosine + H(+). It functions in the pathway alkene biosynthesis; ethylene biosynthesis via S-adenosyl-L-methionine; ethylene from S-adenosyl-L-methionine: step 1/2. In terms of biological role, catalyzes the formation of 1-aminocyclopropane-1-carboxylate, a direct precursor of ethylene in higher plants. The polypeptide is 1-aminocyclopropane-1-carboxylate synthase 1 (ACS1) (Prunus mume (Japanese apricot)).